We begin with the raw amino-acid sequence, 354 residues long: Protein ECM8 (354 aa).

In terms of biological role, may be involved in cell wall organization and biogenesis. This chain is Protein ECM8 (ECM8), found in Saccharomyces cerevisiae (strain ATCC 204508 / S288c) (Baker's yeast).